A 446-amino-acid polypeptide reads, in one-letter code: Keratin, type I cytoskeletal 25 (446 aa).

The segment at 1 to 74 is head; the sequence is MSLRLSSGSR…VNEGGLLSGN (74 aa). The interval 75-110 is coil 1A; it reads EKVTMQNLNDRLASYLDNVQALQEANADLEQKIKGW. In terms of domain architecture, IF rod spans 75–390; sequence EKVTMQNLND…LLIGGDEGAC (316 aa). The tract at residues 111–132 is linker 1; that stretch reads YEKFGPGSCRGLDHDYSRYFPI. Residues 133–224 form a coil 1B region; sequence IDDLKNQIIT…KNHKEEMQAL (92 aa). A linker 12 region spans residues 225–247; that stretch reads QCAAGGNVNVEMNAAPGVDLTVL. The coil 2 stretch occupies residues 248–386; that stretch reads LNNMRAEYEA…ETYCLLIGGD (139 aa). A tail region spans residues 387–446; it reads EGACKSSSYKSKDYGSGNAGNQIKDPVKAIVVKKVLEEVDQRSKILTTRLHSLEEKSQSN. A Phosphoserine modification is found at Ser-438.

Belongs to the intermediate filament family. In terms of assembly, heterodimer of a type I and a type II keratin. Heterodimer with type II keratin KRT5 leading to the formation of keratin intermediate filament (KIF) network. Interacts with KRT6A to form filaments.

It is found in the cytoplasm. Essential for the proper assembly of type I and type II keratin protein complexes and formation of keratin intermediate filaments in the inner root sheath (irs). Plays a role in the cytoskeleton organization. This Mus musculus (Mouse) protein is Keratin, type I cytoskeletal 25.